The primary structure comprises 255 residues: Imidazole glycerol phosphate synthase subunit HisF (255 aa).

Residues Asp-12 and Asp-131 contribute to the active site.

It belongs to the HisA/HisF family. Heterodimer of HisH and HisF.

Its subcellular location is the cytoplasm. It carries out the reaction 5-[(5-phospho-1-deoxy-D-ribulos-1-ylimino)methylamino]-1-(5-phospho-beta-D-ribosyl)imidazole-4-carboxamide + L-glutamine = D-erythro-1-(imidazol-4-yl)glycerol 3-phosphate + 5-amino-1-(5-phospho-beta-D-ribosyl)imidazole-4-carboxamide + L-glutamate + H(+). The protein operates within amino-acid biosynthesis; L-histidine biosynthesis; L-histidine from 5-phospho-alpha-D-ribose 1-diphosphate: step 5/9. Its function is as follows. IGPS catalyzes the conversion of PRFAR and glutamine to IGP, AICAR and glutamate. The HisF subunit catalyzes the cyclization activity that produces IGP and AICAR from PRFAR using the ammonia provided by the HisH subunit. This is Imidazole glycerol phosphate synthase subunit HisF from Ignicoccus hospitalis (strain KIN4/I / DSM 18386 / JCM 14125).